A 332-amino-acid chain; its full sequence is Anthranilate phosphoribosyltransferase (332 aa).

5-phospho-alpha-D-ribose 1-diphosphate contacts are provided by residues Gly-78, 81 to 82, Ser-86, 88 to 91, 106 to 114, and Ser-118; these read GD, NIST, and KHGNKSITS. Gly-78 lines the anthranilate pocket. Ser-90 serves as a coordination point for Mg(2+). Asn-109 provides a ligand contact to anthranilate. Anthranilate is bound at residue Arg-163. Mg(2+) is bound by residues Asp-222 and Glu-223.

It belongs to the anthranilate phosphoribosyltransferase family. In terms of assembly, homodimer. The cofactor is Mg(2+).

It catalyses the reaction N-(5-phospho-beta-D-ribosyl)anthranilate + diphosphate = 5-phospho-alpha-D-ribose 1-diphosphate + anthranilate. It participates in amino-acid biosynthesis; L-tryptophan biosynthesis; L-tryptophan from chorismate: step 2/5. In terms of biological role, catalyzes the transfer of the phosphoribosyl group of 5-phosphorylribose-1-pyrophosphate (PRPP) to anthranilate to yield N-(5'-phosphoribosyl)-anthranilate (PRA). This Staphylococcus aureus (strain USA300) protein is Anthranilate phosphoribosyltransferase.